Consider the following 276-residue polypeptide: Rhomboid protease GlpG (276 aa).

6 helical membrane passes run 94 to 114, 142 to 162, 169 to 189, 192 to 212, 229 to 249, and 250 to 270; these read GPVT…MQIL, ALMH…WYLG, LGSG…GYVQ, FSGP…GYVW, LIIF…GMSM, and ANGA…VDSL. Catalysis depends on Ser-201, which acts as the Nucleophile. Residue His-254 is part of the active site.

It belongs to the peptidase S54 family.

It is found in the cell inner membrane. The enzyme catalyses Cleaves type-1 transmembrane domains using a catalytic dyad composed of serine and histidine that are contributed by different transmembrane domains.. Functionally, rhomboid-type serine protease that catalyzes intramembrane proteolysis. The protein is Rhomboid protease GlpG of Escherichia coli O45:K1 (strain S88 / ExPEC).